We begin with the raw amino-acid sequence, 186 residues long: Transcription factor FapR (186 aa).

Residues 98 to 168 (FTKTQIARGH…YVIEVNSYVR (71 aa)) form the MaoC-like domain.

It belongs to the FapR family.

Transcriptional factor involved in regulation of membrane lipid biosynthesis by repressing genes involved in fatty acid and phospholipid metabolism. This is Transcription factor FapR from Staphylococcus haemolyticus (strain JCSC1435).